The following is a 404-amino-acid chain: Serine/threonine transporter SstT (404 aa).

9 helical membrane passes run 17–37 (IGIGVVIGLLLGILLPDVTAI), 44–64 (FVGALKAIAPLLVFALVVQAI), 75–95 (ITLIIVLYLLGTFLAALVAVI), 138–158 (ALATANYIGVLAWALIFGLAL), 179–199 (IVVWIINVAPIGIMGLVFSTV), 212–232 (LLILVLVGTMLFVALVVNPLL), 287–307 (IPLGAMINMGGAAITINVLTL), 319–339 (FLTALLLSVVAAISACGASGV), and 354–374 (FGISSDLAMQVVGVGFIVGVI).

The protein belongs to the dicarboxylate/amino acid:cation symporter (DAACS) (TC 2.A.23) family.

Its subcellular location is the cell membrane. It catalyses the reaction L-serine(in) + Na(+)(in) = L-serine(out) + Na(+)(out). The enzyme catalyses L-threonine(in) + Na(+)(in) = L-threonine(out) + Na(+)(out). Functionally, involved in the import of serine and threonine into the cell, with the concomitant import of sodium (symport system). In Streptococcus equi subsp. zooepidemicus (strain MGCS10565), this protein is Serine/threonine transporter SstT.